The primary structure comprises 103 residues: Large ribosomal subunit protein uL24 (103 aa).

This sequence belongs to the universal ribosomal protein uL24 family. Part of the 50S ribosomal subunit.

In terms of biological role, one of two assembly initiator proteins, it binds directly to the 5'-end of the 23S rRNA, where it nucleates assembly of the 50S subunit. Its function is as follows. One of the proteins that surrounds the polypeptide exit tunnel on the outside of the subunit. The sequence is that of Large ribosomal subunit protein uL24 from Bacillus anthracis (strain A0248).